The following is a 524-amino-acid chain: Magnesium/proton exchanger 2 (524 aa).

Transmembrane regions (helical) follow at residues 28–48 (GVRA…LSAI), 88–108 (IADV…LATI), 125–145 (GTLV…CVVM), 157–177 (LGVW…LYII), 185–205 (VITL…LLHA), 325–345 (VIGI…AFIP), 349–369 (IAHG…IAYG), 377–397 (ISCV…AAGT), 430–450 (IYVG…LFVY), 462–482 (LSFS…VLVL), and 496–516 (MWAW…VVLS).

It belongs to the Ca(2+):cation antiporter (CaCA) (TC 2.A.19) family. MHX subfamily.

It is found in the vacuole membrane. Functionally, vacuolar transporter that exchanges protons with Mg(2+), Zn(2+) and Fe(2+) ions. May control the partitioning of Mg(2+) and Zn(2+) between plant organs. This Oryza sativa subsp. japonica (Rice) protein is Magnesium/proton exchanger 2 (MHX2).